The primary structure comprises 201 residues: ATP-dependent Clp protease proteolytic subunit (201 aa).

S98 (nucleophile) is an active-site residue. The active site involves H123.

This sequence belongs to the peptidase S14 family. In terms of assembly, fourteen ClpP subunits assemble into 2 heptameric rings which stack back to back to give a disk-like structure with a central cavity, resembling the structure of eukaryotic proteasomes.

It localises to the cytoplasm. The catalysed reaction is Hydrolysis of proteins to small peptides in the presence of ATP and magnesium. alpha-casein is the usual test substrate. In the absence of ATP, only oligopeptides shorter than five residues are hydrolyzed (such as succinyl-Leu-Tyr-|-NHMec, and Leu-Tyr-Leu-|-Tyr-Trp, in which cleavage of the -Tyr-|-Leu- and -Tyr-|-Trp bonds also occurs).. In terms of biological role, cleaves peptides in various proteins in a process that requires ATP hydrolysis. Has a chymotrypsin-like activity. Plays a major role in the degradation of misfolded proteins. This Desulfatibacillum aliphaticivorans protein is ATP-dependent Clp protease proteolytic subunit.